Here is a 449-residue protein sequence, read N- to C-terminus: NADH-quinone oxidoreductase subunit D (449 aa).

Belongs to the complex I 49 kDa subunit family. In terms of assembly, NDH-1 is composed of 14 different subunits. Subunits NuoB, C, D, E, F, and G constitute the peripheral sector of the complex.

The protein localises to the cell membrane. It catalyses the reaction a quinone + NADH + 5 H(+)(in) = a quinol + NAD(+) + 4 H(+)(out). Functionally, NDH-1 shuttles electrons from NADH, via FMN and iron-sulfur (Fe-S) centers, to quinones in the respiratory chain. The immediate electron acceptor for the enzyme in this species is believed to be a menaquinone. Couples the redox reaction to proton translocation (for every two electrons transferred, four hydrogen ions are translocated across the cytoplasmic membrane), and thus conserves the redox energy in a proton gradient. The protein is NADH-quinone oxidoreductase subunit D of Saccharopolyspora erythraea (strain ATCC 11635 / DSM 40517 / JCM 4748 / NBRC 13426 / NCIMB 8594 / NRRL 2338).